The sequence spans 197 residues: Probable GTP-binding protein EngB (197 aa).

Residues 22–195 (GYPEIALVGR…WNWIEAQAFG (174 aa)) enclose the EngB-type G domain. GTP contacts are provided by residues 30–37 (GRSNVGKS), 57–61 (GKTQT), 75–78 (DVPG), 142–145 (TKSD), and 174–176 (FSA). Residues serine 37 and threonine 59 each contribute to the Mg(2+) site.

Belongs to the TRAFAC class TrmE-Era-EngA-EngB-Septin-like GTPase superfamily. EngB GTPase family. Mg(2+) is required as a cofactor.

Functionally, necessary for normal cell division and for the maintenance of normal septation. The sequence is that of Probable GTP-binding protein EngB from Levilactobacillus brevis (strain ATCC 367 / BCRC 12310 / CIP 105137 / JCM 1170 / LMG 11437 / NCIMB 947 / NCTC 947) (Lactobacillus brevis).